The chain runs to 489 residues: Glycogen synthase (489 aa).

Residue R20 coordinates ADP-alpha-D-glucose.

This sequence belongs to the glycosyltransferase 1 family. Bacterial/plant glycogen synthase subfamily.

It carries out the reaction [(1-&gt;4)-alpha-D-glucosyl](n) + ADP-alpha-D-glucose = [(1-&gt;4)-alpha-D-glucosyl](n+1) + ADP + H(+). The protein operates within glycan biosynthesis; glycogen biosynthesis. Synthesizes alpha-1,4-glucan chains using ADP-glucose. In Pelodictyon phaeoclathratiforme (strain DSM 5477 / BU-1), this protein is Glycogen synthase.